The primary structure comprises 133 residues: ATP synthase epsilon chain, chloroplastic (133 aa).

Belongs to the ATPase epsilon chain family. As to quaternary structure, F-type ATPases have 2 components, CF(1) - the catalytic core - and CF(0) - the membrane proton channel. CF(1) has five subunits: alpha(3), beta(3), gamma(1), delta(1), epsilon(1). CF(0) has three main subunits: a, b and c.

The protein localises to the plastid. It is found in the chloroplast thylakoid membrane. In terms of biological role, produces ATP from ADP in the presence of a proton gradient across the membrane. The chain is ATP synthase epsilon chain, chloroplastic from Daucus carota (Wild carrot).